A 440-amino-acid polypeptide reads, in one-letter code: Dynein axonemal assembly factor 11 (440 aa).

4 LRR repeats span residues 20–43 (IFSL…HKWC), 44–65 (RDLK…VGRL), 66–89 (KKLE…GCES), and 90–110 (LQKL…ETLK). In terms of domain architecture, LRRCT spans 128–146 (YQGYRQYVVATVPQLQSLD). Positions 178-192 (EEREKQKSNANEHPE) are enriched in basic and acidic residues. 2 disordered regions span residues 178 to 267 (EERE…RTLI) and 363 to 440 (PKKR…PPLM). The span at 193 to 211 (INQSLSESQNGTQQYPESS) shows a compositional bias: polar residues. Basic and acidic residues predominate over residues 236–259 (SRLEAHRHLEEKRRANEKEKEKPK). Residues 276 to 374 (VNEPKLDFSL…KRTIRPTSVT (99 aa)) enclose the CS domain. Residues 369–378 (RPTSVTSNQN) show a composition bias toward polar residues. Basic and acidic residues-rich tracts occupy residues 379 to 392 (NKKD…RELL) and 420 to 431 (GLEERPVSKDFV).

It belongs to the tilB family. In terms of assembly, interacts with dvl2. Interacts with kur. As to expression, expressed in kinocilia of hair cells.

It is found in the cytoplasm. The protein resides in the dynein axonemal particle. Its subcellular location is the cell projection. The protein localises to the cilium. Functionally, plays a crucial role in regulating cilia motility in pronephric tubules, cloaca and neural tube. Required for establishing left-right asymmetry of the body plan; controls cell fate and convergent extension (CE) movements during gastrulation, respectively, via the Wnt and the planar cell polarity (PCP) signaling pathways. Required for the proper development of renal glomeruli and tubules. The protein is Dynein axonemal assembly factor 11 (dnaaf11) of Danio rerio (Zebrafish).